Here is an 84-residue protein sequence, read N- to C-terminus: Xenoxin-1 (84 aa).

Residues 1-18 (MRYAIVFFLVCVITLGEA) form the signal peptide. Disulfide bonds link Cys-21–Cys-42, Cys-35–Cys-55, Cys-61–Cys-76, and Cys-77–Cys-82.

In terms of tissue distribution, expressed by the skin dorsal glands.

The protein resides in the secreted. In terms of biological role, lacks alpha-neurotoxic activity, has apparently no antibacterial activity, nor anti-coagulant potency. The chain is Xenoxin-1 (xenoxin-1) from Xenopus laevis (African clawed frog).